The primary structure comprises 265 residues: Lipopolysaccharide core heptose(I) kinase WaaP (265 aa).

The active site involves D162.

The protein belongs to the protein kinase superfamily. KdkA/RfaP family. Mg(2+) serves as cofactor.

The protein localises to the cell inner membrane. It carries out the reaction an L-alpha-D-Hep-(1-&gt;3)-L-alpha-D-Hep-(1-&gt;5)-[alpha-Kdo-(2-&gt;4)]-alpha-Kdo-(2-&gt;6)-lipid A + ATP = an L-alpha-D-Hep-(1-&gt;3)-4-O-phospho-L-alpha-D-Hep-(1-&gt;5)-[alpha-Kdo-(2-&gt;4)]-alpha-Kdo-(2-&gt;6)-lipid A + ADP + H(+). The enzyme catalyses L-alpha-D-Hep-(1-&gt;3)-L-alpha-D-Hep-(1-&gt;5)-[alpha-Kdo-(2-&gt;4)]-alpha-Kdo-(2-&gt;6)-lipid A (E. coli) + ATP = L-alpha-D-Hep-(1-&gt;3)-4-O-phospho-L-alpha-D-Hep-(1-&gt;5)-[alpha-Kdo-(2-&gt;4)]-alpha-Kdo-(2-&gt;6)-lipid A (E. coli) + ADP + H(+). It participates in bacterial outer membrane biogenesis; LPS core biosynthesis. Its function is as follows. Kinase involved in the biosynthesis of the core oligosaccharide region of lipopolysaccharide (LPS). Catalyzes the phosphorylation of heptose I (HepI), the first heptose added to the Kdo2-lipid A module. The protein is Lipopolysaccharide core heptose(I) kinase WaaP of Escherichia coli.